A 209-amino-acid chain; its full sequence is Rac-like GTP-binding protein ARAC7 (209 aa).

13 to 20 (GDGAVGKT) serves as a coordination point for GTP. An Effector region motif is present at residues 35–43 (YIPTVFDNF). GTP is bound by residues 60–64 (DTAGQ) and 118–121 (TKLD). S-palmitoyl cysteine attachment occurs at residues Cys-196, Cys-203, and Cys-206.

Belongs to the small GTPase superfamily. Rho family. In terms of processing, although this sequence has a C-terminal -CXXX, it is palmitoylated at Cys-206, rather than prenylated.

Its subcellular location is the membrane. Acts as a negative regulator of abscisic acid (ABA) responses. This chain is Rac-like GTP-binding protein ARAC7 (ARAC7), found in Arabidopsis thaliana (Mouse-ear cress).